Reading from the N-terminus, the 398-residue chain is Phosphoglycerate kinase (398 aa).

Substrate contacts are provided by residues 21–23 (DFN), R36, 59–62 (HFGR), R117, and R150. ATP is bound by residues K200, E321, and 351-354 (GGDS).

It belongs to the phosphoglycerate kinase family. As to quaternary structure, monomer.

The protein localises to the cytoplasm. It catalyses the reaction (2R)-3-phosphoglycerate + ATP = (2R)-3-phospho-glyceroyl phosphate + ADP. Its pathway is carbohydrate degradation; glycolysis; pyruvate from D-glyceraldehyde 3-phosphate: step 2/5. This chain is Phosphoglycerate kinase, found in Wolbachia pipientis wMel.